The following is a 97-amino-acid chain: ESAT-6-like protein EsxG (97 aa).

The protein belongs to the WXG100 family. CFP-10 subfamily. Forms a tight 1:1 complex with EsxH.

It localises to the secreted. This Mycolicibacterium smegmatis (strain ATCC 700084 / mc(2)155) (Mycobacterium smegmatis) protein is ESAT-6-like protein EsxG.